A 195-amino-acid chain; its full sequence is ATP-dependent Clp protease proteolytic subunit (195 aa).

The active-site Nucleophile is the Ser-99. His-124 is a catalytic residue.

It belongs to the peptidase S14 family. Fourteen ClpP subunits assemble into 2 heptameric rings which stack back to back to give a disk-like structure with a central cavity, resembling the structure of eukaryotic proteasomes.

Its subcellular location is the cytoplasm. It carries out the reaction Hydrolysis of proteins to small peptides in the presence of ATP and magnesium. alpha-casein is the usual test substrate. In the absence of ATP, only oligopeptides shorter than five residues are hydrolyzed (such as succinyl-Leu-Tyr-|-NHMec, and Leu-Tyr-Leu-|-Tyr-Trp, in which cleavage of the -Tyr-|-Leu- and -Tyr-|-Trp bonds also occurs).. Functionally, cleaves peptides in various proteins in a process that requires ATP hydrolysis. Has a chymotrypsin-like activity. Plays a major role in the degradation of misfolded proteins. This is ATP-dependent Clp protease proteolytic subunit from Desulforamulus reducens (strain ATCC BAA-1160 / DSM 100696 / MI-1) (Desulfotomaculum reducens).